Reading from the N-terminus, the 450-residue chain is MRECISIHVGQAGVQIGNACWELYCLEHGIQPDGQMPSDKTIGGGDDSFNTFFSETGAGKHVPRAVFVDLEPTVVDEVRTGTYRQLFHPEQLITGKEDAANNYARGHYTIGKEIVDLVLDRVRKLSDQCTGLQGFLIFHSFGGGTGSGFASLLMERLSVDYGKKSKLEFAIYPAPQVSTAVVEPYNSILTTHTTLEHSDCAFMVDNEAIYDICRRNLDIERPTYTNLNRLIGQIVSSITASLRFDGALNVDLTEFQTNLVPYPRIHFPLVTYAPVISAEKAYHEMLSVAEITNACFEPANQMVKCDPRHGKYMACCMLYRGDVVPKDVNAAIATIKTKRTIQFVDWCPTGFKVGINYQPPTVVPGGDLAKVQRAVCMLSNTTAIAEAWARLDHKFDLMYAKRAFVHWYVGEGMEEGEFSEAREDLAALEKDYEEVGVDSVEGEAEEGEEY.

The MREC motif motif lies at Met1–Cys4. GTP is bound at residue Gln11. Residue Lys40 is modified to N6-acetyllysine. GTP is bound by residues Glu71, Ser140, Gly144, Thr145, Thr179, Asn206, and Asn228. Glu71 provides a ligand contact to Mg(2+). Glu254 is an active-site residue.

Belongs to the tubulin family. As to quaternary structure, dimer of alpha and beta chains. A typical microtubule is a hollow water-filled tube with an outer diameter of 25 nm and an inner diameter of 15 nM. Alpha-beta heterodimers associate head-to-tail to form protofilaments running lengthwise along the microtubule wall with the beta-tubulin subunit facing the microtubule plus end conferring a structural polarity. Microtubules usually have 13 protofilaments but different protofilament numbers can be found in some organisms and specialized cells. It depends on Mg(2+) as a cofactor. In terms of processing, some glutamate residues at the C-terminus are polyglycylated, resulting in polyglycine chains on the gamma-carboxyl group. Glycylation is mainly limited to tubulin incorporated into axonemes (cilia and flagella) whereas glutamylation is prevalent in neuronal cells, centrioles, axonemes, and the mitotic spindle. Both modifications can coexist on the same protein on adjacent residues, and lowering polyglycylation levels increases polyglutamylation, and reciprocally. The precise function of polyglycylation is still unclear. Some glutamate residues at the C-terminus are polyglutamylated, resulting in polyglutamate chains on the gamma-carboxyl group. Polyglutamylation plays a key role in microtubule severing by spastin (SPAST). SPAST preferentially recognizes and acts on microtubules decorated with short polyglutamate tails: severing activity by SPAST increases as the number of glutamates per tubulin rises from one to eight, but decreases beyond this glutamylation threshold. Post-translationally, acetylation of alpha chains at Lys-40 is located inside the microtubule lumen. This modification has been correlated with increased microtubule stability, intracellular transport and ciliary assembly. In terms of processing, undergoes a tyrosination/detyrosination cycle, the cyclic removal and re-addition of a C-terminal tyrosine residue by the enzymes tubulin tyrosine carboxypeptidase (MATCAP, VASH1 or VASH2) and tubulin tyrosine ligase (TTL), respectively. Tyrosination promotes microtubule interaction with CAP-Gly microtubule plus-end tracking proteins. Tyrosinated tubulins regulate the initiation of dynein-driven motility. Post-translationally, detyrosination is involved in metaphase plate congression by guiding chromosomes during mitosis. Detyrosination increases microtubules-dependent mechanotransduction in dystrophic cardiac and skeletal muscle. In cardiomyocytes, detyrosinated microtubules are required to resist to contractile compression during contraction. In terms of tissue distribution, testis specific.

The protein localises to the cytoplasm. It is found in the cytoskeleton. The catalysed reaction is GTP + H2O = GDP + phosphate + H(+). Functionally, tubulin is the major constituent of microtubules, a cylinder consisting of laterally associated linear protofilaments composed of alpha- and beta-tubulin heterodimers. Microtubules grow by the addition of GTP-tubulin dimers to the microtubule end, where a stabilizing cap forms. Below the cap, tubulin dimers are in GDP-bound state, owing to GTPase activity of alpha-tubulin. The sequence is that of Tubulin alpha chain, testis-specific from Oncorhynchus mykiss (Rainbow trout).